The primary structure comprises 642 residues: MVHITLGQAIWVSVKPIIKIYLIIGVGFLMAKMGILTVEATRIISDIVLTVLLPSLSFNKIVANIEDKDIKSVGIICLSALLIFGSGFFFAYVVRLFLPVPKQWYGGILAGGMFPNISDLPIAYLQSMDQGLVFSEEEGNKGVANVIIFLTMFLICIFNLGGFRLIESDFEYNDDESAVRVSETTKTQPAVSANTTNTDTSERFFSNEQQLFNNKYTARDSLTEAIGTKGENADVPPISRRSTNSIAPLSLPDTSSNSKITKPVQVKARNTIACTQSEESQATRGSNPLDSQSSASTIHSYNTSESYESSIDTMRARRTASQPRAYNTTTLLEENCLDEKCPKNMSMAALEPIRSIDMRALPSQNIHHLIREYSNVDQYGHQRRNSSLRGADMNDVHSISSNSTLQTIKTANLTRILTSDATVSKKDIETSGESLPQWMRKFSLTPLLVFFLKNCLRPCSMAVIIALTVAFIPWVKALFVTTANTPHISQAPDNAPPLSFFMDFTGYVGAACVPFGLILLGATLGRLKIGNLYPGFWKAAVTLVILRQCVMPIFGVLWCDRLVKAGWVNWQDDRMLLFVIAISWNLPTMTTLIYFTASFTPPETTAPIQMECVSFFLMLQYPLMVVSLPFLVSYFLKVQMNL.

Residues 1-15 (MVHITLGQAIWVSVK) are Cytoplasmic-facing. A helical transmembrane segment spans residues 16-36 (PIIKIYLIIGVGFLMAKMGIL). At 37–42 (TVEATR) the chain is on the extracellular side. The chain crosses the membrane as a helical span at residues 43–63 (IISDIVLTVLLPSLSFNKIVA). Topologically, residues 64–73 (NIEDKDIKSV) are cytoplasmic. Residues 74-94 (GIICLSALLIFGSGFFFAYVV) form a helical membrane-spanning segment. The Extracellular portion of the chain corresponds to 95 to 104 (RLFLPVPKQW). A helical membrane pass occupies residues 105 to 125 (YGGILAGGMFPNISDLPIAYL). Over 126 to 142 (QSMDQGLVFSEEEGNKG) the chain is Cytoplasmic. The helical transmembrane segment at 143–163 (VANVIIFLTMFLICIFNLGGF) threads the bilayer. Over 164 to 460 (RLIESDFEYN…FLKNCLRPCS (297 aa)) the chain is Extracellular. Disordered stretches follow at residues 183–206 (ETTK…RFFS) and 227–324 (GTKG…SQPR). 2 stretches are compositionally biased toward polar residues: residues 240–260 (RRST…NSKI) and 272–312 (IACT…SSID). The chain crosses the membrane as a helical span at residues 461 to 481 (MAVIIALTVAFIPWVKALFVT). The Cytoplasmic portion of the chain corresponds to 482–499 (TANTPHISQAPDNAPPLS). The helical transmembrane segment at 500–520 (FFMDFTGYVGAACVPFGLILL) threads the bilayer. Residues 521–538 (GATLGRLKIGNLYPGFWK) lie on the Extracellular side of the membrane. A helical membrane pass occupies residues 539–559 (AAVTLVILRQCVMPIFGVLWC). Residues 560-574 (DRLVKAGWVNWQDDR) lie on the Cytoplasmic side of the membrane. A helical membrane pass occupies residues 575–595 (MLLFVIAISWNLPTMTTLIYF). Over 596 to 614 (TASFTPPETTAPIQMECVS) the chain is Extracellular. Residues 615-635 (FFLMLQYPLMVVSLPFLVSYF) form a helical membrane-spanning segment. Residues 636 to 642 (LKVQMNL) lie on the Cytoplasmic side of the membrane.

The protein belongs to the auxin efflux carrier (TC 2.A.69) family.

The protein resides in the membrane. This is an uncharacterized protein from Saccharomyces cerevisiae (strain ATCC 204508 / S288c) (Baker's yeast).